The primary structure comprises 423 residues: 3-isopropylmalate dehydratase large subunit 1 (423 aa).

[4Fe-4S] cluster-binding residues include Cys-302, Cys-362, and Cys-365.

Belongs to the aconitase/IPM isomerase family. LeuC type 2 subfamily. Heterodimer of LeuC and LeuD. Requires [4Fe-4S] cluster as cofactor.

It carries out the reaction (2R,3S)-3-isopropylmalate = (2S)-2-isopropylmalate. It participates in amino-acid biosynthesis; L-leucine biosynthesis; L-leucine from 3-methyl-2-oxobutanoate: step 2/4. In terms of biological role, catalyzes the isomerization between 2-isopropylmalate and 3-isopropylmalate, via the formation of 2-isopropylmaleate. The chain is 3-isopropylmalate dehydratase large subunit 1 from Pyrococcus abyssi (strain GE5 / Orsay).